The following is a 202-amino-acid chain: MIMKIYVVDNGGQWTHREWRVLRELGVETEIVPNDIESRKLDGLDGLVLSGGAPNIDEEMDKLGSIGEYIEDHDYPVFGICVGAQFIALHYGAQVVKAKHPEFGKTLVKISEPANVLAGLPENIIAWENHNDEIKNLTSDFVLTASSETCEVQAFYHKHKPLYAVQFHPEVEHTQFGREIFKNFIAICQQHKEKLINNVNNK.

Residues 4–194 enclose the Glutamine amidotransferase type-1 domain; that stretch reads KIYVVDNGGQ…IAICQQHKEK (191 aa). The active-site Nucleophile is the Cys81. Active-site residues include His168 and Glu170.

As to quaternary structure, heterodimer composed of a glutamine amidotransferase subunit (A) and a GMP-binding subunit (B).

The enzyme catalyses XMP + L-glutamine + ATP + H2O = GMP + L-glutamate + AMP + diphosphate + 2 H(+). Its pathway is purine metabolism; GMP biosynthesis; GMP from XMP (L-Gln route): step 1/1. Its function is as follows. Catalyzes the synthesis of GMP from XMP. The protein is GMP synthase [glutamine-hydrolyzing] subunit A of Thermoplasma volcanium (strain ATCC 51530 / DSM 4299 / JCM 9571 / NBRC 15438 / GSS1).